Reading from the N-terminus, the 200-residue chain is Holliday junction resolvase RecU (200 aa).

The interval 1–24 (MTIRYPNGKRYDQASQPHKTPIKK) is disordered. The Mg(2+) site is built by T85, D87, E100, and Q119.

It belongs to the RecU family. It depends on Mg(2+) as a cofactor.

It is found in the cytoplasm. It catalyses the reaction Endonucleolytic cleavage at a junction such as a reciprocal single-stranded crossover between two homologous DNA duplexes (Holliday junction).. Its function is as follows. Endonuclease that resolves Holliday junction intermediates in genetic recombination. Cleaves mobile four-strand junctions by introducing symmetrical nicks in paired strands. Promotes annealing of linear ssDNA with homologous dsDNA. Required for DNA repair, homologous recombination and chromosome segregation. This Bacillus mycoides (strain KBAB4) (Bacillus weihenstephanensis) protein is Holliday junction resolvase RecU.